Reading from the N-terminus, the 283-residue chain is MKKRSPIVAGYFYPDKPGELRSVIEWSFKHGIGPGKPPSPSDIPATNSIGYVAPHAGYIYSGPVAAHVYFDMALNKKPDTIVILGTNHTGLGRPVSVYPEGVWETPLGDLVVDSEIGRLIVENSEIAEFDEYAHLEEHSIEVQLPFIVYIYGEDVKITPIVIGIHTPDIARDLAKSIYEASMSTGKRIIVIASSDFNHYEPHEETSRKDSMAIDRILKLDTDGLYNVILHNDISICGPGGIMTLMEYTKKLGGKAQLLKYATSGDTSGDYSHVVGYAALKFYI.

Belongs to the MEMO1 family.

The sequence is that of MEMO1 family protein DKAM_1357 from Desulfurococcus amylolyticus (strain DSM 18924 / JCM 16383 / VKM B-2413 / 1221n) (Desulfurococcus kamchatkensis).